The following is a 440-amino-acid chain: UDP-N-acetylmuramoylalanine--D-glutamate ligase (440 aa).

Position 115 to 121 (115 to 121 (GSNGKST)) interacts with ATP.

Belongs to the MurCDEF family.

Its subcellular location is the cytoplasm. It carries out the reaction UDP-N-acetyl-alpha-D-muramoyl-L-alanine + D-glutamate + ATP = UDP-N-acetyl-alpha-D-muramoyl-L-alanyl-D-glutamate + ADP + phosphate + H(+). It functions in the pathway cell wall biogenesis; peptidoglycan biosynthesis. Cell wall formation. Catalyzes the addition of glutamate to the nucleotide precursor UDP-N-acetylmuramoyl-L-alanine (UMA). The chain is UDP-N-acetylmuramoylalanine--D-glutamate ligase from Aliivibrio fischeri (strain MJ11) (Vibrio fischeri).